The chain runs to 420 residues: uncharacterized protein (420 aa).

The TRAM domain occupies N7–S65. Q245, Y280, E304, and D349 together coordinate S-adenosyl-L-methionine. C376 acts as the Nucleophile in catalysis.

Belongs to the class I-like SAM-binding methyltransferase superfamily. RNA M5U methyltransferase family.

This is an uncharacterized protein from Corynebacterium diphtheriae (strain ATCC 700971 / NCTC 13129 / Biotype gravis).